We begin with the raw amino-acid sequence, 484 residues long: Protein phosphatase 1B (484 aa).

A compositionally biased stretch (basic and acidic residues) spans 1–14 (MGAFLDKPKTEKHN). A disordered region spans residues 1-20 (MGAFLDKPKTEKHNAHGAGN). Gly-2 carries the N-myristoyl glycine lipid modification. Lys-12 is covalently cross-linked (Glycyl lysine isopeptide (Lys-Gly) (interchain with G-Cter in ISG15)). In terms of domain architecture, PPM-type phosphatase spans 23-295 (RYGLSSMQGW…DNMSIVLVCF (273 aa)). Asp-60 and Gly-61 together coordinate Mn(2+). Lys-142 is covalently cross-linked (Glycyl lysine isopeptide (Lys-Gly) (interchain with G-Cter in ISG15)). 2 residues coordinate Mn(2+): Asp-243 and Asp-286. A Phosphoserine modification is found at Ser-391. Positions 431 to 484 (EENPAEQAATAASSNSDAGNTVAMQESHTESKSDLAELDSCTEDAGTKMSGEKL) are disordered. A compositionally biased stretch (polar residues) spans 440–456 (TAASSNSDAGNTVAMQE).

The protein belongs to the PP2C family. As to quaternary structure, monomer. Interacts with PAK6. Interacts with the phosphorylated form of IKBKB/IKKB. Mg(2+) is required as a cofactor. The cofactor is Mn(2+). Isgylation negatively regulates its activity. In terms of processing, N-myristoylation is essential for the recognition of its substrates for dephosphorylation.

It localises to the cytoplasm. The protein localises to the cytosol. The protein resides in the membrane. The enzyme catalyses O-phospho-L-seryl-[protein] + H2O = L-seryl-[protein] + phosphate. It carries out the reaction O-phospho-L-threonyl-[protein] + H2O = L-threonyl-[protein] + phosphate. Its function is as follows. Enzyme with a broad specificity. Dephosphorylates PRKAA1 and PRKAA2. Inhibits TBK1-mediated antiviral signaling by dephosphorylating it at 'Ser-172'. Plays an important role in the termination of TNF-alpha-mediated NF-kappa-B activation through dephosphorylating and inactivating IKBKB/IKKB. The chain is Protein phosphatase 1B (PPM1B) from Bos taurus (Bovine).